The chain runs to 302 residues: Phosphoribosylaminoimidazole-succinocarboxamide synthase (302 aa).

Belongs to the SAICAR synthetase family.

The catalysed reaction is 5-amino-1-(5-phospho-D-ribosyl)imidazole-4-carboxylate + L-aspartate + ATP = (2S)-2-[5-amino-1-(5-phospho-beta-D-ribosyl)imidazole-4-carboxamido]succinate + ADP + phosphate + 2 H(+). Its pathway is purine metabolism; IMP biosynthesis via de novo pathway; 5-amino-1-(5-phospho-D-ribosyl)imidazole-4-carboxamide from 5-amino-1-(5-phospho-D-ribosyl)imidazole-4-carboxylate: step 1/2. The chain is Phosphoribosylaminoimidazole-succinocarboxamide synthase from Cupriavidus necator (strain ATCC 17699 / DSM 428 / KCTC 22496 / NCIMB 10442 / H16 / Stanier 337) (Ralstonia eutropha).